The sequence spans 2169 residues: MATDGITSRFGFNERRRTHNRNSCRILEDKMLAKLLLLALAGLTAAYQYENSFKGYNPGYKGYDAGYKGYGYDAGYKYNNQGYSYKNGFEYGYQNAYQAAFYKHRPNVTEFEFSSWMPNYEYVYNVTSKTMTALAELDDQWTGVFTRAYLVIRPKSRDYVVAYVKQPEYAVFNERLPYGYATKFYHDMFKFQPMPMSSKPFGIRYHKGAIKGLYVEKTIPNNEVNILKAWISQLQVDTRGANLMHSSKPIHPSKNEWNGHYKVMEPLVTGECETHYDVNLIPAYMIQAHKQWVPQGQLRGEDGQFIQVTKTQNFDRCDQRMGYHFGFTGYSDFRPNTNQMGNVASKSLVSYMYLTGNWYNFTIQSSSMINKVAIAPSLVNKEPALVYAQVNMTLNDVHPYDKVPMGPAEDLKVFVDLVYSYNMPSDKKNYVRPGNETSSSSSSSSSSSSSSSESSSSSSESVENPKISPVEQYKPLLDKVEKRGNRYRRDLNAIKEKKYYEAYKMDQYRLHRLNDTSSDSSSSDSSSSSSSESKEHRNGTSSYSSSSSSSSSSSSSESSSYSSSSSSSSESYSISSEEYYYQPTPANFSYAPEAPFLPFFTGYKGYNIFYARNVDAIRSVGKLVEEIASDLENPSDLPKSNTMSKFNILTRAIRAMGYEDIYELAQKYFVSQKERQVAQFSDKKFSKRVDAWVTLRDAVAEAGTPSAFKLIFDFIKEKKLRGYEAATVIASLAQSIRYPTEHLLHEFFLLVTSDVVLHQEYLNATALFAYSNFVNQAHVSNRSAYNYYPVFSFGRLADADYKIIEHKIVPWFAHQLREAVNEGDSVKIQVYIRSLGNLGHPQILSVFEPYLEGTIQITDFQRLAIMVALDNLVIYYPSLARSVLYRAYQNTADVHEVRCAAVHLLMRTDPPADMLQRMAEFTHHDPSLYVRAAVKSAIETAALADDYDEDSKLAINAKAAINFLNPEDVSIQYSFNHIRDYALENLELSYRLHYGEIASNDHRYPSGLFYHLRQNFGGFKKYTSFYYLVSSMEAFFDIFKKQYNTKYFADYYKSADYSTNYYNFDKYSKYYKQYYYSKDSEYYQKFYGQKKDYYNDKEPFKFTAPRIAKLLNIDAEEAEQLEGQLLFKLFNGYFFTAFDNQTIENLPHKMRHLFENLEDGYAFDVTKFYQQQDVVLAWPLATGFPFIYTLKAPTVFKFEVDASAKTHPQVYKMPAGHPETENDDFFYMPQSINGSVDVNLLYHRMVDAKVGFVTPFDHQRYIAGYQKKLHGYLPFNVELGLDFVKDEYEFEFKFLEPKDDHLLFHMSSWPYTGYKDITDMRPIAENPNAKIVHDDNQSTKTMEHTFGQDMTGVALRFHAKYDFDLINFQQFWSLVQKNDFVSAVNYPFAYQPYEYHQFNLFYDSQRTHAKSFKFYAYQKFGAPSFEETGPKHPANRHSYSGNYYESNYAQPFVYSPGSQRRYEQFFRNAASGIRNSFVRYYDFGFEFYAPQYKSEFTFTTAFADSPVDKTSRQLYYFYASPMFPSQSYFKDIPFSGKQFQFCATATSEFPRVPYLKFSDFDKYYGDASQYFDFLYGESCQGGAHIAVKGKQKQTGKYREYLRFSDVAKACKEQMANGYYQFEECQQAIDQAYYYDFYDYAIEYKDVGSVAKNLTNKFYNYFQYAFYPYFESNFFYHGKSNYIKAEFEFAPYGDYYNASFFGPSYAFQVQNYPVFNDYSTYFPYFFKYTFFPRYQPYYMHRLPAHKPRNRPYYELSNYEQFAVFDRKPQYPSCSFSNDYFYTFDNKKYFYDMGECWHAVMYTVKPDYDFYAQQSHFYNSDFEYKYKNGFEEYEQFAALARRGSDNQLYFKFLFGDNYIEVFPNNGGIPFVKYNGRPYDISKSNIAHFEYKEGYPSFPFFYAFAYPNKDLEVSFFGGKLKFATDGYRARFFSDYSFYNNFVGLCGTNNGEYFDEFVTPDQCYMRKPEFFAASYAITGQNCTGPAKAFNYAYQQKAKQECVKREVYYGDIIYNQEYYHPRYRYYNHNVEESSSSSSSSSSDSSSSSSSSESSSRSRSGSSSSSSSSEEQKEFHPHKQEHSMKECPVQHQHQFFEQGDRTCFSLRPLPVCHSKCVATEKISKYFDVHCFEKDSTQAKKYKSDIGRGYTPDFKSFAPHKTYKFNYPKSCVYKAY.

Residues 1–46 (MATDGITSRFGFNERRRTHNRNSCRILEDKMLAKLLLLALAGLTAA) form the signal peptide. N-linked (GlcNAc...) asparagine glycosylation is found at asparagine 107 and asparagine 125. Residues 116 to 1008 (WMPNYEYVYN…SNDHRYPSGL (893 aa)) form the Vitellogenin domain. Sulfotyrosine is present on residues tyrosine 159 and tyrosine 163. N-linked (GlcNAc...) asparagine glycosylation is found at asparagine 360, asparagine 391, and asparagine 435. Disordered regions lie at residues 426–481 (DKKN…DKVE) and 514–570 (NDTS…SSSE). A compositionally biased stretch (low complexity) spans 438 to 461 (SSSSSSSSSSSSSSSESSSSSSES). Residue asparagine 514 is glycosylated (N-linked (GlcNAc...) asparagine). The span at 517–531 (SSDSSSSDSSSSSSS) shows a compositional bias: low complexity. Asparagine 538 is a glycosylation site (N-linked (GlcNAc...) asparagine). Positions 541-570 (SSYSSSSSSSSSSSSSESSSYSSSSSSSSE) are enriched in low complexity. N-linked (GlcNAc...) asparagine glycans are attached at residues asparagine 587, asparagine 763, and asparagine 781. Tyrosine 1067, tyrosine 1070, and tyrosine 1074 each carry sulfotyrosine. Residues asparagine 1140, asparagine 1233, and asparagine 1336 are each glycosylated (N-linked (GlcNAc...) asparagine). Sulfotyrosine is present on residues tyrosine 1563, tyrosine 1564, and tyrosine 1570. N-linked (GlcNAc...) asparagine glycans are attached at residues asparagine 1652 and asparagine 1696. Residues tyrosine 1737, tyrosine 1806, tyrosine 1809, tyrosine 1822, tyrosine 1824, and tyrosine 1888 each carry the sulfotyrosine modification. Residues 1770–1979 (PSCSFSNDYF…SYAITGQNCT (210 aa)) form the VWFD domain. 2 disulfide bridges follow: cysteine 1772/cysteine 1942 and cysteine 1794/cysteine 1978. An N-linked (GlcNAc...) asparagine glycan is attached at asparagine 1977. Residues 2026 to 2063 (EESSSSSSSSSSDSSSSSSSSESSSRSRSGSSSSSSSS) are compositionally biased toward low complexity. The segment at 2026–2081 (EESSSSSSSSSSDSSSSSSSSESSSRSRSGSSSSSSSSEEQKEFHPHKQEHSMKEC) is disordered. Positions 2064–2079 (EEQKEFHPHKQEHSMK) are enriched in basic and acidic residues.

Glycosylated, phosphorylated and sulfated. The large subunit is sulfated more extensively than the small one. Produced by the fat body, where it is cleaved in the rough endoplasmic reticulum or cis-Golgi before being secreted into hemolymph. It is then sequestered by a single class of receptor mediated endocytosis in the ovary.

In terms of biological role, precursor of the egg-yolk proteins that are sources of nutrients during embryonic development. May supply aromatic amino acids to the cuticle of rapidly developing embryos. The chain is Vitellogenin-A1 (VGA1) from Aedes aegypti (Yellowfever mosquito).